A 480-amino-acid chain; its full sequence is Salicylate hydroxylase asL1 (480 aa).

Residues 17 to 37 (PMEIAIVGGGIVGVILAIGLT) traverse the membrane as a helical segment. Residues Glu47 and Ala60 each contribute to the FAD site. The N-linked (GlcNAc...) asparagine glycan is linked to Asn87. Arg131 serves as a coordination point for FAD. Asn168 carries an N-linked (GlcNAc...) asparagine glycan. Catalysis depends on residues Arg213 and Tyr246. Residue Asn250 is glycosylated (N-linked (GlcNAc...) asparagine). FAD is bound by residues Asp329 and Ala342. Residues Asn400 and Asn464 are each glycosylated (N-linked (GlcNAc...) asparagine).

The protein belongs to the paxM FAD-dependent monooxygenase family. FAD serves as cofactor.

It is found in the membrane. It functions in the pathway secondary metabolite biosynthesis; terpenoid biosynthesis. Salicylate hydroxylase; part of the gene cluster that mediates the biosynthesis of xenovulene A, an unusual meroterpenoid that has potent inhibitory effects on the human gamma-aminobutyrate A (GABAA) benzodiazepine receptor. The first step of xenovulene A biosynthesis is the biosynthesis of 3-methylorcinaldehyde performed by the non-reducing polyketide synthase aspks1. The salicylate hydroxylase asL1 then catalyzes the oxidative dearomatization of 3-methylorcinaldehyde to yield a dearomatized hydroxycyclohexadione. The 2-oxoglutarate-dependent dioxygenase asL3 further catalyzes the oxidative ring expansion to provide the first tropolone metabolite. The cytochrome P450 monooxygenase asR2 allows the synthesis of tropolone hemiacetal. In parallel, a previously unrecognised class of terpene cyclase, asR6, produces alpha-humulene from farnesylpyrophosphate (FPP). The putative Diels-Alderase asR5 probably catalyzes the formation of the tropolone-humulene skeleton by linking humulene and the polyketide moiety. Oxidative-ring contractions catalyzed by asL4 and asL6 then processively remove carbon atoms from the polyketide to yield xenovulene A. The chain is Salicylate hydroxylase asL1 from Sarocladium schorii (Acremonium strictum (strain IMI 501407)).